Here is a 379-residue protein sequence, read N- to C-terminus: Acyl-CoA dehydrogenase (379 aa).

Belongs to the acyl-CoA dehydrogenase family. Requires FAD as cofactor.

It catalyses the reaction a 2,3-saturated acyl-CoA + A = a 2,3-dehydroacyl-CoA + AH2. The polypeptide is Acyl-CoA dehydrogenase (mmgC) (Bacillus subtilis (strain 168)).